Reading from the N-terminus, the 343-residue chain is Cytoplasmic tRNA 2-thiolation protein 1 (343 aa).

This sequence belongs to the TtcA family. CTU1/NCS6/ATPBD3 subfamily.

The protein localises to the cytoplasm. Its pathway is tRNA modification; 5-methoxycarbonylmethyl-2-thiouridine-tRNA biosynthesis. Its function is as follows. Plays a central role in 2-thiolation of mcm(5)S(2)U at tRNA wobble positions of tRNA(Lys), tRNA(Glu) and tRNA(Gln). Directly binds tRNAs and probably acts by catalyzing adenylation of tRNAs, an intermediate required for 2-thiolation. It is unclear whether it acts as a sulfurtransferase that transfers sulfur from thiocarboxylated URM1 onto the uridine of tRNAs at wobble position. The sequence is that of Cytoplasmic tRNA 2-thiolation protein 1 from Drosophila mojavensis (Fruit fly).